Reading from the N-terminus, the 207-residue chain is Small ribosomal subunit protein uS4 (207 aa).

A disordered region spans residues 33 to 54; sequence KLDSKPGQHGRTSGARTSDYGN. Polar residues predominate over residues 42–53; it reads GRTSGARTSDYG. Positions 97-160 constitute an S4 RNA-binding domain; that stretch reads SRLDNVVYRM…KKQVRIAEAL (64 aa).

Belongs to the universal ribosomal protein uS4 family. In terms of assembly, part of the 30S ribosomal subunit. Contacts protein S5. The interaction surface between S4 and S5 is involved in control of translational fidelity.

In terms of biological role, one of the primary rRNA binding proteins, it binds directly to 16S rRNA where it nucleates assembly of the body of the 30S subunit. With S5 and S12 plays an important role in translational accuracy. In Cupriavidus necator (strain ATCC 17699 / DSM 428 / KCTC 22496 / NCIMB 10442 / H16 / Stanier 337) (Ralstonia eutropha), this protein is Small ribosomal subunit protein uS4.